The following is a 714-amino-acid chain: P-loop NTPase domain-containing protein LPA1 (714 aa).

Residues 1-11 (MPMPPQCASSK) are compositionally biased toward low complexity. 3 disordered regions span residues 1–42 (MPMP…PPPK), 259–293 (QKLD…PRTE), and 595–689 (FGSE…GSGN). Over residues 271–285 (EGRDDTSDDKAHHGS) the composition is skewed to basic and acidic residues. The segment covering 595–617 (FGSEEDADDPPDAGTDEDLTDEE) has biased composition (acidic residues). Positions 618-636 (RDMHEIEAGSVDEHSTKSD) are enriched in basic and acidic residues. A compositionally biased stretch (polar residues) spans 659-670 (AASSTKNSSNQE).

As to expression, expressed in roots, leaf blade shoots, leaf sheath shoots and panicles.

Its function is as follows. Required for the accumulation of phytic acid in seeds. Phytic acid is the primary storage form of phosphorus in cereal grains and other plant seeds. The chain is P-loop NTPase domain-containing protein LPA1 from Oryza sativa subsp. japonica (Rice).